The following is a 714-amino-acid chain: Zinc finger matrin-type protein 1 (714 aa).

Residues 89–119 form a Matrin-type 1 zinc finger; it reads NFCKPCGVVLQHESERISHFESEIHAQNVKF. A disordered region spans residues 172–214; the sequence is HYVGKSHSPTQNQSLEEHDQVSPSTCSPKMDEPNTTPAPPPFL. The segment at 230 to 254 adopts a Matrin-type 2 zinc-finger fold; sequence YVCHICSITFTSLHMFRSHMQGTEH. A compositionally biased stretch (basic and acidic residues) spans 417–434; the sequence is RERVDSEHRQRPCEERFS. 2 disordered regions span residues 417–469 and 571–714; these read RERV…NDDF and MPAS…ILGF. 2 stretches are compositionally biased toward polar residues: residues 437–446 and 575–588; these read APQTYQQEYS and LSLS…SSYN. Over residues 609–619 the composition is skewed to basic residues; the sequence is SHRRRRQKRKR. Basic and acidic residues-rich tracts occupy residues 620 to 632 and 640 to 662; these read HLEE…EKEQ and SYQD…EDKA. The span at 669 to 678 shows a compositional bias: basic residues; that stretch reads TKHRRKKRKH.

The protein localises to the nucleus. In Mus musculus (Mouse), this protein is Zinc finger matrin-type protein 1 (Zmat1).